A 267-amino-acid chain; its full sequence is Protein COFACTOR ASSEMBLY OF COMPLEX C SUBUNIT B CCB1, chloroplastic (267 aa).

The N-terminal 44 residues, 1–44 (MATKLISPPLSCPWVTSREVIIKGLPRRRREWMVTKRNRVSAVT), are a transit peptide targeting the chloroplast. Residues 45-84 (AMIVEPLSVVSSSAIQIHQWWEQNPNSLLLMTEATGGYSL) lie on the Lumenal side of the membrane. Residues 85-105 (ASYYTSLGLFVISVPGLWSLI) traverse the membrane as a helical segment. Residues 106 to 164 (KRSVKSKIVRKTFVVNDVKKEPKQVAGEILSFFTRKNFNITDRGETITFEGKMVPSRGQ) lie on the Stromal side of the membrane. A helical membrane pass occupies residues 165–185 (AALLTFCTCISLASVGLVLTI). Position 186 (T186) is a topological domain, lumenal. Residues 187-207 (VPDFGNNWFFIILLSPLAGVY) traverse the membrane as a helical segment. Topologically, residues 208–267 (YWKKASRKEEIKVKMMVGSKGRLDEIVVQGDDVQVEEMRKELQLNEKGMVYVKGLFERSS) are stromal.

It localises to the plastid. Its subcellular location is the chloroplast thylakoid membrane. Functionally, required for the biogenesis and accumulation of native cytochrome b6 in the thylakoid membrane. Controls the conversion of apocytochrome b6 to holocytochrome b6. Required for covalent binding of the c-type heme to cytochrome b6. The chain is Protein COFACTOR ASSEMBLY OF COMPLEX C SUBUNIT B CCB1, chloroplastic from Arabidopsis thaliana (Mouse-ear cress).